The sequence spans 159 residues: Phosphopantetheine adenylyltransferase (159 aa).

Serine 9 is a substrate binding site. ATP-binding positions include 9-10 (SF) and histidine 17. 3 residues coordinate substrate: lysine 41, leucine 74, and lysine 88. ATP contacts are provided by residues 89 to 91 (GLR), glutamate 99, and 123 to 129 (YLHLSST).

This sequence belongs to the bacterial CoaD family. Homohexamer. Mg(2+) is required as a cofactor.

It is found in the cytoplasm. It carries out the reaction (R)-4'-phosphopantetheine + ATP + H(+) = 3'-dephospho-CoA + diphosphate. Its pathway is cofactor biosynthesis; coenzyme A biosynthesis; CoA from (R)-pantothenate: step 4/5. Its function is as follows. Reversibly transfers an adenylyl group from ATP to 4'-phosphopantetheine, yielding dephospho-CoA (dPCoA) and pyrophosphate. This Arthrobacter sp. (strain FB24) protein is Phosphopantetheine adenylyltransferase.